The sequence spans 413 residues: Histidine--tRNA ligase (413 aa).

It belongs to the class-II aminoacyl-tRNA synthetase family. In terms of assembly, homodimer.

It localises to the cytoplasm. The catalysed reaction is tRNA(His) + L-histidine + ATP = L-histidyl-tRNA(His) + AMP + diphosphate + H(+). The sequence is that of Histidine--tRNA ligase from Wolbachia sp. subsp. Brugia malayi (strain TRS).